The following is a 92-amino-acid chain: Small ribosomal subunit protein bS18 (92 aa).

This sequence belongs to the bacterial ribosomal protein bS18 family. As to quaternary structure, part of the 30S ribosomal subunit. Forms a tight heterodimer with protein bS6.

In terms of biological role, binds as a heterodimer with protein bS6 to the central domain of the 16S rRNA, where it helps stabilize the platform of the 30S subunit. The sequence is that of Small ribosomal subunit protein bS18 from Cupriavidus necator (strain ATCC 17699 / DSM 428 / KCTC 22496 / NCIMB 10442 / H16 / Stanier 337) (Ralstonia eutropha).